The following is a 419-amino-acid chain: E3 ubiquitin-protein ligase RNF130 (419 aa).

A signal peptide spans 1–27; the sequence is MSGAARAGPARLAALALLTCSLWPTRA. Residues 28 to 194 lie on the Extracellular side of the membrane; sequence DNASQEYYTA…MPPKNFSRGS (167 aa). Residues Asn-29, Asn-40, Asn-112, Asn-135, Asn-172, and Asn-189 are each glycosylated (N-linked (GlcNAc...) asparagine). A PA domain is found at 105–176; it reads IALLQRGNCT…SYLEKNISVQ (72 aa). The helical transmembrane segment at 195–217 threads the bilayer; the sequence is LVFVSISFIVLMIISSAWLIFYF. Residues 218–419 are Cytoplasmic-facing; it reads IQKIRYTNAR…SLNANEVEWF (202 aa). An RING-type zinc finger spans residues 264-305; it reads CAVCIESYKQNDVVRVLPCKHVFHKSCVDPWLSEHCTCPMCK. Ser-341 carries the post-translational modification Phosphoserine.

As to expression, in testis sections, expressed in interstitial tissue and seminiferous tubules. In tubules, expression is mainly in postmeiotic germ cells and to a much lesser extent in Sertoli cells (at protein level). Expressed at high levels in liver, lung, stomach, heart and thymus.

Its subcellular location is the membrane. The protein resides in the cytoplasm. It carries out the reaction S-ubiquitinyl-[E2 ubiquitin-conjugating enzyme]-L-cysteine + [acceptor protein]-L-lysine = [E2 ubiquitin-conjugating enzyme]-L-cysteine + N(6)-ubiquitinyl-[acceptor protein]-L-lysine.. Its pathway is protein modification; protein ubiquitination. Functionally, acts as an E3 ubiquitin-protein ligase. May have a role during the programmed cell death of hematopoietic cells. This is E3 ubiquitin-protein ligase RNF130 from Rattus norvegicus (Rat).